Reading from the N-terminus, the 488-residue chain is Serine hydroxymethyltransferase, mitochondrial (488 aa).

The transit peptide at 1 to 20 (MAVLRQFVKNSYSSIPKRFY) directs the protein to the mitochondrion. K265 carries the N6-(pyridoxal phosphate)lysine modification.

This sequence belongs to the SHMT family. In terms of assembly, homotetramer. The cofactor is pyridoxal 5'-phosphate.

The protein resides in the mitochondrion. It catalyses the reaction (6R)-5,10-methylene-5,6,7,8-tetrahydrofolate + glycine + H2O = (6S)-5,6,7,8-tetrahydrofolate + L-serine. Its pathway is one-carbon metabolism; tetrahydrofolate interconversion. Interconversion of serine and glycine. The sequence is that of Serine hydroxymethyltransferase, mitochondrial (shm2) from Schizosaccharomyces pombe (strain 972 / ATCC 24843) (Fission yeast).